The sequence spans 436 residues: Acrosin (436 aa).

The first 19 residues, 1-19, serve as a signal peptide directing secretion; sequence MVEMLPTVAVLVLAVSVVA. N-linked (GlcNAc...) asparagine glycosylation occurs at N22. 6 disulfides stabilise this stretch: C25–C155, C29–C163, C74–C90, C178–C247, C210–C226, and C237–C267. Residues 43–291 form the Peptidase S1 domain; sequence IVSGQSAQLG…YLDWIASKIG (249 aa). Active-site charge relay system residues include H89 and D143. The N-linked (GlcNAc...) asparagine glycan is linked to N211. The active-site Charge relay system is S241. A propeptide spans 346 to 436 (pro-rich); sequence PSSTQTSSSL…NKPSEPFLHS (91 aa).

This sequence belongs to the peptidase S1 family. In terms of assembly, heavy chain (catalytic) and a light chain linked by two disulfide bonds. Forms a heterodimer with SERPINA5.

The enzyme catalyses Preferential cleavage: Arg-|-Xaa, Lys-|-Xaa.. With respect to regulation, inhibited by SERPINA5. In terms of biological role, acrosin is the major protease of mammalian spermatozoa. It is a serine protease of trypsin-like cleavage specificity, it is synthesized in a zymogen form, proacrosin and stored in the acrosome. This is Acrosin (Acr) from Mus musculus (Mouse).